We begin with the raw amino-acid sequence, 600 residues long: Methionine--tRNA ligase (600 aa).

A 'HIGH' region motif is present at residues 12-22 (PYANGPRHIGH). Positions 144, 147, 157, and 160 each coordinate Zn(2+). The short motif at 351-355 (KFSSS) is the 'KMSKS' region element. Residue S354 coordinates ATP.

The protein belongs to the class-I aminoacyl-tRNA synthetase family. MetG type 1 subfamily. In terms of assembly, monomer. It depends on Zn(2+) as a cofactor.

The protein localises to the cytoplasm. The enzyme catalyses tRNA(Met) + L-methionine + ATP = L-methionyl-tRNA(Met) + AMP + diphosphate. In terms of biological role, is required not only for elongation of protein synthesis but also for the initiation of all mRNA translation through initiator tRNA(fMet) aminoacylation. This Chloroflexus aurantiacus (strain ATCC 29364 / DSM 637 / Y-400-fl) protein is Methionine--tRNA ligase.